The sequence spans 281 residues: AT-hook motif nuclear-localized protein 20 (281 aa).

Disordered regions lie at residues 43–85 (MNQS…APIF) and 216–247 (MEEE…DLSG). The segment at residues 67 to 79 (RRPRGRPPGSKNK) is a DNA-binding region (a.T hook). Residues 91–229 (PNALRSHVLE…EDGGGSRQIH (139 aa)) enclose the PPC domain.

Its subcellular location is the nucleus. Its function is as follows. Transcription factor that specifically binds AT-rich DNA sequences related to the nuclear matrix attachment regions (MARs). Negatively regulates plant innate immunity (PTI) to pathogens through the down-regulation of the PAMP-triggered NHO1 and FRK1 expression. The chain is AT-hook motif nuclear-localized protein 20 from Arabidopsis thaliana (Mouse-ear cress).